The following is a 283-amino-acid chain: 4-hydroxy-3-methylbut-2-enyl diphosphate reductase (283 aa).

Residue Cys12 participates in [4Fe-4S] cluster binding. Residues His41 and His74 each coordinate (2E)-4-hydroxy-3-methylbut-2-enyl diphosphate. Positions 41 and 74 each coordinate dimethylallyl diphosphate. Residues His41 and His74 each coordinate isopentenyl diphosphate. Cys96 provides a ligand contact to [4Fe-4S] cluster. His124 is a binding site for (2E)-4-hydroxy-3-methylbut-2-enyl diphosphate. His124 is a binding site for dimethylallyl diphosphate. An isopentenyl diphosphate-binding site is contributed by His124. Glu126 acts as the Proton donor in catalysis. Residue Thr161 participates in (2E)-4-hydroxy-3-methylbut-2-enyl diphosphate binding. Cys189 is a binding site for [4Fe-4S] cluster. Ser217, Asn219, and Ser261 together coordinate (2E)-4-hydroxy-3-methylbut-2-enyl diphosphate. Dimethylallyl diphosphate contacts are provided by Ser217, Asn219, and Ser261. Residues Ser217, Asn219, and Ser261 each coordinate isopentenyl diphosphate.

This sequence belongs to the IspH family. It depends on [4Fe-4S] cluster as a cofactor.

The enzyme catalyses isopentenyl diphosphate + 2 oxidized [2Fe-2S]-[ferredoxin] + H2O = (2E)-4-hydroxy-3-methylbut-2-enyl diphosphate + 2 reduced [2Fe-2S]-[ferredoxin] + 2 H(+). It carries out the reaction dimethylallyl diphosphate + 2 oxidized [2Fe-2S]-[ferredoxin] + H2O = (2E)-4-hydroxy-3-methylbut-2-enyl diphosphate + 2 reduced [2Fe-2S]-[ferredoxin] + 2 H(+). Its pathway is isoprenoid biosynthesis; dimethylallyl diphosphate biosynthesis; dimethylallyl diphosphate from (2E)-4-hydroxy-3-methylbutenyl diphosphate: step 1/1. The protein operates within isoprenoid biosynthesis; isopentenyl diphosphate biosynthesis via DXP pathway; isopentenyl diphosphate from 1-deoxy-D-xylulose 5-phosphate: step 6/6. Catalyzes the conversion of 1-hydroxy-2-methyl-2-(E)-butenyl 4-diphosphate (HMBPP) into a mixture of isopentenyl diphosphate (IPP) and dimethylallyl diphosphate (DMAPP). Acts in the terminal step of the DOXP/MEP pathway for isoprenoid precursor biosynthesis. This Anaeromyxobacter sp. (strain Fw109-5) protein is 4-hydroxy-3-methylbut-2-enyl diphosphate reductase.